The following is a 253-amino-acid chain: MEKLLIVNADDFGLCKGQNYGIIEAFRHGIVSSTTAMMNCAEIYHAAELSKQNPALPVGMHFVLTYGRPLTAMQSLVDAKGELGKWLWARAEAGELNLDEIAQELTAQFNKFVAVFGRPPTHVDSHHHVHMLPQIYPLIESFAHEKSLPLRIDRHEAQQQGMVLNSPRSTEWFDAGFYGENLTEQSFLQLLAKADQNGINTIEVMCHPAFIDKILMTSGYCYPRLTELEILTSPALKQSIEQLGYRLGSYSDC.

Residues histidine 61 and histidine 126 each coordinate Mg(2+).

This sequence belongs to the YdjC deacetylase family. ChbG subfamily. Homodimer. Requires Mg(2+) as cofactor.

It is found in the cytoplasm. The catalysed reaction is N,N'-diacetylchitobiose + H2O = N-acetyl-beta-D-glucosaminyl-(1-&gt;4)-D-glucosamine + acetate. The enzyme catalyses diacetylchitobiose-6'-phosphate + H2O = N'-monoacetylchitobiose-6'-phosphate + acetate. The protein operates within glycan degradation; chitin degradation. Functionally, involved in the degradation of chitin. ChbG is essential for growth on the acetylated chitooligosaccharides chitobiose and chitotriose but is dispensable for growth on cellobiose and chitosan dimer, the deacetylated form of chitobiose. Deacetylation of chitobiose-6-P and chitotriose-6-P is necessary for both the activation of the chb promoter by the regulatory protein ChbR and the hydrolysis of phosphorylated beta-glucosides by the phospho-beta-glucosidase ChbF. Catalyzes the removal of only one acetyl group from chitobiose-6-P to yield monoacetylchitobiose-6-P, the inducer of ChbR and the substrate of ChbF. The polypeptide is Chitooligosaccharide deacetylase (Yersinia enterocolitica serotype O:8 / biotype 1B (strain NCTC 13174 / 8081)).